The primary structure comprises 52 residues: Insulin-2 (52 aa).

Intrachain disulfides connect C7/C38, C19/C51, and C37/C42.

Belongs to the insulin family. In terms of assembly, heterodimer of a B chain and an A chain linked by two disulfide bonds.

Its subcellular location is the secreted. Its function is as follows. Insulin decreases blood glucose concentration. It increases cell permeability to monosaccharides, amino acids and fatty acids. It accelerates glycolysis, the pentose phosphate cycle, and glycogen synthesis in liver. The polypeptide is Insulin-2 (Huso dauricus (Kaluga sturgeon)).